A 198-amino-acid polypeptide reads, in one-letter code: Probable GTP-binding protein EngB (198 aa).

In terms of domain architecture, EngB-type G spans 21–195; the sequence is NFSEVAFLGR…EDIIIDQTLG (175 aa). GTP is bound by residues 29 to 36, 56 to 60, 81 to 84, 151 to 154, and 174 to 176; these read GRSNVGKS, GKTQL, DLPG, TKCD, and VSN. Serine 36 and threonine 58 together coordinate Mg(2+).

The protein belongs to the TRAFAC class TrmE-Era-EngA-EngB-Septin-like GTPase superfamily. EngB GTPase family. Mg(2+) is required as a cofactor.

In terms of biological role, necessary for normal cell division and for the maintenance of normal septation. This chain is Probable GTP-binding protein EngB, found in Campylobacter jejuni subsp. jejuni serotype O:6 (strain 81116 / NCTC 11828).